The primary structure comprises 318 residues: Transaldolase (318 aa).

Lysine 131 serves as the catalytic Schiff-base intermediate with substrate.

Belongs to the transaldolase family. Type 1 subfamily. As to quaternary structure, homodimer.

The protein localises to the cytoplasm. It catalyses the reaction D-sedoheptulose 7-phosphate + D-glyceraldehyde 3-phosphate = D-erythrose 4-phosphate + beta-D-fructose 6-phosphate. Its pathway is carbohydrate degradation; pentose phosphate pathway; D-glyceraldehyde 3-phosphate and beta-D-fructose 6-phosphate from D-ribose 5-phosphate and D-xylulose 5-phosphate (non-oxidative stage): step 2/3. Functionally, transaldolase is important for the balance of metabolites in the pentose-phosphate pathway. This Buchnera aphidicola subsp. Cinara cedri (strain Cc) protein is Transaldolase.